Reading from the N-terminus, the 369-residue chain is Galactose-1-phosphate uridylyltransferase (369 aa).

Zn(2+)-binding residues include cysteine 54 and cysteine 57. UDP-alpha-D-glucose is bound by residues alanine 63 and 79–80; that span reads ND. Histidine 127 contributes to the Zn(2+) binding site. Residue asparagine 172 participates in UDP-alpha-D-glucose binding. Zn(2+) is bound at residue histidine 183. Catalysis depends on histidine 185, which acts as the Tele-UMP-histidine intermediate. Glutamine 187 serves as a coordination point for UDP-alpha-D-glucose. Fe cation is bound by residues glutamate 201, histidine 300, histidine 317, and histidine 319. UDP-alpha-D-glucose is bound by residues 332 to 335 and 337 to 338; these read KFCV and FE.

Belongs to the galactose-1-phosphate uridylyltransferase type 1 family. As to quaternary structure, homodimer. Requires Zn(2+) as cofactor.

The enzyme catalyses alpha-D-galactose 1-phosphate + UDP-alpha-D-glucose = alpha-D-glucose 1-phosphate + UDP-alpha-D-galactose. The protein operates within carbohydrate metabolism; galactose metabolism. The chain is Galactose-1-phosphate uridylyltransferase (gal7) from Schizosaccharomyces pombe (strain 972 / ATCC 24843) (Fission yeast).